Consider the following 205-residue polypeptide: GTP-binding protein yptV5 (205 aa).

15 to 22 (GDSGVGKT) serves as a coordination point for GTP. The Effector region motif lies at 37-45 (YKATIGADF). GTP contacts are provided by residues 63–67 (DTAGQ) and 125–128 (NKID). S-geranylgeranyl cysteine attachment occurs at residues C204 and C205.

This sequence belongs to the small GTPase superfamily. Rab family.

It localises to the cell membrane. Functionally, protein transport. Probably involved in vesicular traffic. In Volvox carteri (Green alga), this protein is GTP-binding protein yptV5 (YPTV5).